We begin with the raw amino-acid sequence, 552 residues long: Putative pentatricopeptide repeat-containing protein At1g64310 (552 aa).

PPR repeat units lie at residues 39–69, 70–104, 105–139, 140–170, 171–205, 206–240, 241–271, 272–306, 307–341, 342–372, 373–407, 408–438, and 444–474; these read DPYFATQLARFYALNDDLISARKLFDVFPER, SVFLWNSIIRAYAKAHQFTTVLSLFSQILRSDTRP, DNFTYACLARGFSESFDTKGLRCIHGIAIVSGLGF, DQICGSAIVKAYSKAGLIVEASKLFCSIPDP, DLALWNVMILGYGCCGFWDKGINLFNLMQHRGHQP, NCYTMVALTSGLIDPSLLLVAWSVHAFCLKINLDS, HSYVGCALVNMYSRCMCIASACSVFNSISEP, DLVACSSLITGYSRCGNHKEALHLFAELRMSGKKP, DCVLVAIVLGSCAELSDSVSGKEVHSYVIRLGLEL, DIKVCSALIDMYSKCGLLKCAMSLFAGIPEK, NIVSFNSLILGLGLHGFASTAFEKFTEILEMGLIP, DEITFSALLCTCCHSGLLNKGQEIFERMKSE, and QTEHYVYMVKLMGMAGKLEEAFEFVMSLQKP. Positions 479-552 are type E motif; degenerate; the sequence is ILGALLSCCE…GGKLPGISWF (74 aa).

It belongs to the PPR family. PCMP-E subfamily.

The protein is Putative pentatricopeptide repeat-containing protein At1g64310 (PCMP-E65) of Arabidopsis thaliana (Mouse-ear cress).